The chain runs to 1091 residues: Rho GTPase-activating protein 7 (1091 aa).

Residues 11 to 78 (LTQIEAKEAC…LNKCAVMKLE (68 aa)) enclose the SAM domain. Phosphoserine occurs at positions 86, 89, and 320. The tract at residues 273 to 447 (QLNCVEISAL…RLSIYDNVPG (175 aa)) is focal adhesion-targeting (FAT). Disordered stretches follow at residues 292–327 (VRKRSVSNSTQTSSSSSQSETSSAVSTPSPVTRTRS), 382–439 (PKAL…SSRL), and 491–553 (SDEG…GVGA). Composition is skewed to low complexity over residues 297–323 (VSNSTQTSSSSSQSETSSAVSTPSPVT) and 386–400 (SNGSFPPSGNNSSVN). Residues 414–425 (LRRENSSDSPKE) show a composition bias toward basic and acidic residues. Over residues 499–511 (ALDSVSPCPSSPK) the composition is skewed to polar residues. The segment covering 513 to 523 (IHLDVDNDRAT) has biased composition (basic and acidic residues). The span at 526–535 (DLDSTGNSLN) shows a compositional bias: polar residues. Positions 614–636 (KHGFSWAVPKFMKRIKVPDYKDR) are polybasic cluster (PBR). One can recognise a Rho-GAP domain in the interval 641–847 (VPLTVNVQRT…HMIAECKKLF (207 aa)). One can recognise an START domain in the interval 877–1084 (RNDESADYQH…RDSFSNQNTE (208 aa)).

In terms of assembly, interacts with EF1A1, facilitates EF1A1 distribution to the membrane periphery and ruffles upon growth factor stimulation and suppresses cell migration. Interacts with tensin TNS1 (via N-terminus); the interaction is decreased by phosphorylation of TNS1. Interacts with TNS3 and PTEN; in resting cells, interacts with TNS3 (via C2 tensin-type domain) but, following growth factor stimulation, TNS3 and PTEN are phosphorylated which leads to weakened interaction with TNS3 and enhanced interaction with PTEN. Interacts (via C-terminus) with tensin TNS4 (via SH2 domain); the interaction is independent of tyrosine phosphorylation of DLC1.

It localises to the cytoplasm. The protein localises to the cell junction. The protein resides in the focal adhesion. Its subcellular location is the membrane. In terms of biological role, functions as a GTPase-activating protein for the small GTPases RHOA, RHOB, RHOC and CDC42, terminating their downstream signaling. This induces morphological changes and detachment through cytoskeletal reorganization, playing a critical role in biological processes such as cell migration and proliferation. Also functions in vivo as an activator of the phospholipase PLCD1. Active DLC1 increases cell migration velocity but reduces directionality. Required for growth factor-induced epithelial cell migration; in resting cells, interacts with TNS3 while PTEN interacts with the p85 regulatory subunit of the PI3K kinase complex but growth factor stimulation induces phosphorylation of TNS3 and PTEN, causing them to change their binding preference so that PTEN interacts with DLC1 and TNS3 interacts with p85. The PTEN-DLC1 complex translocates to the posterior of migrating cells to activate RHOA while the TNS3-p85 complex translocates to the leading edge of migrating cells to promote RAC1 activation. This is Rho GTPase-activating protein 7 (DLC1) from Canis lupus familiaris (Dog).